Consider the following 555-residue polypeptide: Splicing factor U2af large subunit A (555 aa).

A disordered region spans residues 1–165 (MRDYEGNGVD…ISGFDMAPPT (165 aa)). 2 stretches are compositionally biased toward basic and acidic residues: residues 23–81 (ISRD…EKDR) and 90–127 (RDRS…DRED). Positions 143–155 (SKSRSRSPSKSKR) are enriched in basic residues. RRM domains follow at residues 221–304 (RRVY…RPSD), 341–419 (DRIF…RANQ), and 460–546 (EVVT…YPEN).

This sequence belongs to the splicing factor SR family. In terms of tissue distribution, expressed in stems, leaves and apical buds.

It localises to the nucleus. In terms of biological role, necessary for the splicing of pre-mRNA. Binds to the U -enriched regions of plant introns. The polypeptide is Splicing factor U2af large subunit A (U2AF65A) (Nicotiana plumbaginifolia (Leadwort-leaved tobacco)).